Reading from the N-terminus, the 116-residue chain is Methionine-R-sulfoxide reductase B1 (116 aa).

A MsrB domain is found at 1–106 (MSFCSFFGGE…FSSSLKFIPK (106 aa)). Zn(2+)-binding residues include Cys-23, Cys-26, Cys-71, and Cys-74. The active-site Nucleophile is the Sec-95. A non-standard amino acid (selenocysteine) is located at residue Sec-95.

It belongs to the MsrB Met sulfoxide reductase family. Requires Zn(2+) as cofactor. Post-translationally, truncated MSRB1/SEPX1 proteins produced by failed UGA/Sec decoding are ubiquitinated by the CRL2(FEM1C) E3 ubiquitin-protein ligase complex.

The protein resides in the cytoplasm. Its subcellular location is the nucleus. The protein localises to the cytoskeleton. It carries out the reaction L-methionyl-[protein] + [thioredoxin]-disulfide + H2O = L-methionyl-(R)-S-oxide-[protein] + [thioredoxin]-dithiol. The enzyme catalyses [thioredoxin]-disulfide + L-methionine + H2O = L-methionine (R)-S-oxide + [thioredoxin]-dithiol. Methionine-sulfoxide reductase that specifically reduces methionine (R)-sulfoxide back to methionine. While in many cases, methionine oxidation is the result of random oxidation following oxidative stress, methionine oxidation is also a post-translational modification that takes place on specific residue. Acts as a regulator of actin assembly by reducing methionine (R)-sulfoxide mediated by MICALs (MICAL1, MICAL2 or MICAL3) on actin, thereby promoting filament repolymerization. Plays a role in innate immunity by reducing oxidized actin, leading to actin repolymerization in macrophages. This is Methionine-R-sulfoxide reductase B1 (Msrb1) from Rattus norvegicus (Rat).